Here is a 280-residue protein sequence, read N- to C-terminus: 2-dehydro-3-deoxyphosphooctonate aldolase (280 aa).

It belongs to the KdsA family.

It localises to the cytoplasm. It catalyses the reaction D-arabinose 5-phosphate + phosphoenolpyruvate + H2O = 3-deoxy-alpha-D-manno-2-octulosonate-8-phosphate + phosphate. Its pathway is carbohydrate biosynthesis; 3-deoxy-D-manno-octulosonate biosynthesis; 3-deoxy-D-manno-octulosonate from D-ribulose 5-phosphate: step 2/3. The protein operates within bacterial outer membrane biogenesis; lipopolysaccharide biosynthesis. The protein is 2-dehydro-3-deoxyphosphooctonate aldolase of Neisseria gonorrhoeae (strain NCCP11945).